The primary structure comprises 124 residues: Large ribosomal subunit protein mL52 (124 aa).

The transit peptide at 1–23 directs the protein to the mitochondrion; the sequence is MAALGMLLSTGVRRLHCGSAARA. A disordered region spans residues 99–124; sequence LQEEKRKQQNALKPKGVLLQNPGPSQ.

Belongs to the mitochondrion-specific ribosomal protein mL52 family. Component of the mitochondrial ribosome large subunit (39S) which comprises a 16S rRNA and about 50 distinct proteins.

Its subcellular location is the mitochondrion. The polypeptide is Large ribosomal subunit protein mL52 (MRPL52) (Bos taurus (Bovine)).